A 3093-amino-acid chain; its full sequence is Genome polyprotein (3093 aa).

One can recognise a Peptidase S30 domain in the interval 255 to 403; that stretch reads KRLLRHVHQA…TTTGERIEYY (149 aa). Catalysis depends on for P1 proteinase activity residues His311, Asp323, and Ser355. Positions 690–809 constitute a Peptidase C6 domain; that stretch reads HYVPKVGYCY…ASELKEYEIG (120 aa). Residues Cys698 and His769 each act as for helper component proteinase activity in the active site. The Helicase ATP-binding domain maps to 1215–1366; the sequence is RVLADKDNEF…AQKSLDIMTL (152 aa). 1228 to 1235 provides a ligand contact to ATP; that stretch reads GHVGCGKS. The DEVH box motif lies at 1316 to 1319; it reads DEVH. One can recognise a Helicase C-terminal domain in the interval 1367-1546; it reads PTMTPLDFVK…QVPPVLRNVN (180 aa). The Nuclear localization signal motif lies at 1883 to 1895; that stretch reads DKVRKKANVHAMQ. Tyr1915 carries the post-translational modification O-(5'-phospho-RNA)-tyrosine. The 217-residue stretch at 2041 to 2257 folds into the Peptidase C4 domain; sequence SKALYGGPRC…VDVGGLYIHN (217 aa). Active-site for nuclear inclusion protein A activity residues include His2082, Asp2121, and Cys2193. Residues 2516–2639 enclose the RdRp catalytic domain; the sequence is EWFIDADGSQ…NANEEAKDVV (124 aa). Residues 2800–2826 show a composition bias toward low complexity; sequence NAAATSGATTPAQNVGAGTTTPAKATP. Residues 2800–2842 form a disordered region; it reads NAAATSGATTPAQNVGAGTTTPAKATPQSGRRPSFGSLIDNPI.

It belongs to the potyviridae genome polyprotein family. VPg is uridylylated by the polymerase and is covalently attached to the 5'-end of the genomic RNA. This uridylylated form acts as a nucleotide-peptide primer for the polymerase. In terms of processing, genome polyprotein of potyviruses undergoes post-translational proteolytic processing by the main proteinase NIa-pro resulting in the production of at least ten individual proteins. The P1 proteinase and the HC-pro cleave only their respective C-termini autocatalytically. 6K1 is essential for proper proteolytic separation of P3 from CI.

The protein localises to the host cytoplasmic vesicle. It is found in the virion. It catalyses the reaction RNA(n) + a ribonucleoside 5'-triphosphate = RNA(n+1) + diphosphate. The catalysed reaction is Hydrolyzes glutaminyl bonds, and activity is further restricted by preferences for the amino acids in P6 - P1' that vary with the species of potyvirus, e.g. Glu-Xaa-Xaa-Tyr-Xaa-Gln-|-(Ser or Gly) for the enzyme from tobacco etch virus. The natural substrate is the viral polyprotein, but other proteins and oligopeptides containing the appropriate consensus sequence are also cleaved.. The enzyme catalyses Hydrolyzes a Gly-|-Gly bond at its own C-terminus, commonly in the sequence -Tyr-Xaa-Val-Gly-|-Gly, in the processing of the potyviral polyprotein.. In terms of biological role, required for aphid transmission and also has proteolytic activity. Only cleaves a Gly-Gly dipeptide at its own C-terminus. Interacts with virions and aphid stylets. Acts as a suppressor of RNA-mediated gene silencing, also known as post-transcriptional gene silencing (PTGS), a mechanism of plant viral defense that limits the accumulation of viral RNAs. May have RNA-binding activity. Has helicase activity. It may be involved in replication. Functionally, indispensable for virus replication. Reduces the abundance of host transcripts related to jasmonic acid biosynthesis therefore altering the host defenses. In order to increase its own stability, decreases host protein degradation pathways. Its function is as follows. Indispensable for virus replication. In terms of biological role, mediates the cap-independent, EIF4E-dependent translation of viral genomic RNAs. Binds to the cap-binding site of host EIF4E and thus interferes with the host EIF4E-dependent mRNA export and translation. VPg-RNA directly binds EIF4E and is a template for transcription. Also forms trimeric complexes with EIF4E-EIF4G, which are templates for translation. Has RNA-binding and proteolytic activities. Functionally, an RNA-dependent RNA polymerase that plays an essential role in the virus replication. Its function is as follows. Involved in aphid transmission, cell-to-cell and systemis movement, encapsidation of the viral RNA and in the regulation of viral RNA amplification. The polypeptide is Genome polyprotein (Brome streak virus (strain 11-Cal) (BStV)).